The sequence spans 161 residues: Large ribosomal subunit protein uL30m (161 aa).

A mitochondrion-targeting transit peptide spans 1-34 (MAGILRLVVQWPPGRLQTVTKGVESLICTDWIRH).

This sequence belongs to the universal ribosomal protein uL30 family. Component of the mitochondrial large ribosomal subunit (mt-LSU). Mature mammalian 55S mitochondrial ribosomes consist of a small (28S) and a large (39S) subunit. The 28S small subunit contains a 12S ribosomal RNA (12S mt-rRNA) and 30 different proteins. The 39S large subunit contains a 16S rRNA (16S mt-rRNA), a copy of mitochondrial valine transfer RNA (mt-tRNA(Val)), which plays an integral structural role, and 52 different proteins.

Its subcellular location is the mitochondrion. The protein is Large ribosomal subunit protein uL30m (MRPL30) of Homo sapiens (Human).